A 507-amino-acid chain; its full sequence is Probable cytochrome P450 6a18 (507 aa).

Cys451 lines the heme pocket.

The protein belongs to the cytochrome P450 family. Heme serves as cofactor.

It is found in the endoplasmic reticulum membrane. It localises to the microsome membrane. Functionally, may be involved in the metabolism of insect hormones and in the breakdown of synthetic insecticides. This Drosophila melanogaster (Fruit fly) protein is Probable cytochrome P450 6a18 (Cyp6a18).